Consider the following 94-residue polypeptide: uncharacterized protein (94 aa).

The segment at 1–22 (MATLQQAQQQNNQLTQQNNQLT) is disordered. The stretch at 1-77 (MATLQQAQQQ…NRLHSENHRL (77 aa)) forms a coiled coil.

This is an uncharacterized protein from Acheta domesticus (House cricket).